The following is an 832-amino-acid chain: Ventricular zone-expressed PH domain-containing protein homolog 1 (832 aa).

The interaction with TGFBR1 stretch occupies residues 201 to 319 (AELLALMSQL…RYLVSQLANM (119 aa)). Positions 497–519 (DTHGSQLRNSSASHPSIIHSEPE) are disordered. Residues 499–510 (HGSQLRNSSASH) show a composition bias toward polar residues. An interaction with TGFBR1 region spans residues 663 to 832 (ESTFPQQKDL…RESREVTTYL (170 aa)). Positions 716 to 818 (QPLIEGKLKE…WLQCINVALA (103 aa)) constitute a PH domain.

Belongs to the MELT/VEPH family. In terms of assembly, interacts with TGFBR1.

The protein localises to the cell membrane. In terms of biological role, interacts with TGF-beta receptor type-1 (TGFBR1) and inhibits dissociation of activated SMAD2 from TGFBR1, impeding its nuclear accumulation and resulting in impaired TGF-beta signaling. May also affect FOXO, Hippo and Wnt signaling. The chain is Ventricular zone-expressed PH domain-containing protein homolog 1 (Veph1) from Rattus norvegicus (Rat).